A 404-amino-acid polypeptide reads, in one-letter code: Caspase-1 (404 aa).

The CARD domain occupies 1 to 91; it reads MADKVLKEKR…YLAGTLGLSA (91 aa). A propeptide spanning residues 1-119 is cleaved from the precursor; that stretch reads MADKVLKEKR…SFPAPQAVQD (119 aa). Lys-134 is covalently cross-linked (Glycyl lysine isopeptide (Lys-Gly) (interchain with G-Cter in ubiquitin)). Active-site residues include His-237 and Cys-285. A propeptide spans 298–316 (interdomain linker); that stretch reads SVGVSGNLSLPTTEEFEDD. Position 302 is a phosphoserine (Ser-302).

The protein belongs to the peptidase C14A family. Heterotetramer that consists of two anti-parallel arranged heterodimers, each one formed by a 20 kDa (Caspase-1 subunit p20) and a 10 kDa (Caspase-1 subunit p10) subunit. May be a component of the inflammasome, a protein complex which also includes PYCARD, CARD8 and NLRP2 and whose function would be the activation of pro-inflammatory caspases. Component of the AIM2 PANoptosome complex, a multiprotein complex that drives inflammatory cell death (PANoptosis). Interacts with CARD8; interacts with the released C-terminus of CARD8 which forms an inflammasome and directly activates CASP1 to promote pyroptosis. Both the p10 and p20 subunits interact with MEFV. Interacts with CARD17P/INCA and CARD18. Interacts with SERPINB1; this interaction regulates CASP1 activity. In terms of assembly, heterotetramer that consists of two anti-parallel arranged heterodimers, each one formed by a 20 kDa (Caspase-1 subunit p20) and a 10 kDa (Caspase-1 subunit p10) subunit. Can form a heterodimer with isoform epsilon which then has an inhibitory effect. As to quaternary structure, heterotetramer that consists of two anti-parallel arranged heterodimers, each one formed by a 20 kDa (Caspase-1 subunit p20) and a 10 kDa (Caspase-1 subunit p10) subunit. Can form a heterodimer with Caspase-1 subunit p20 which then has an inhibitory effect. In terms of processing, the two subunits are derived from the precursor sequence by an autocatalytic mechanism. Ubiquitinated via 'Lys-11'-linked polyubiquitination. Deubiquitinated by USP8. Post-translationally, cleavage in the interdomain linker region is required to induce pyroptosis. In terms of tissue distribution, expressed in larger amounts in spleen and lung. Detected in liver, heart, small intestine, colon, thymus, prostate, skeletal muscle, peripheral blood leukocytes, kidney and testis. No expression in the brain.

The protein resides in the cytoplasm. It is found in the cell membrane. The enzyme catalyses Strict requirement for an Asp residue at position P1 and has a preferred cleavage sequence of Tyr-Val-Ala-Asp-|-.. With respect to regulation, (Microbial infection) Specifically inhibited by the cowpox virus Crma protein. Functionally, thiol protease involved in a variety of inflammatory processes by proteolytically cleaving other proteins, such as the precursors of the inflammatory cytokines interleukin-1 beta (IL1B) and interleukin 18 (IL18) as well as the pyroptosis inducer Gasdermin-D (GSDMD), into active mature peptides. Plays a key role in cell immunity as an inflammatory response initiator: once activated through formation of an inflammasome complex, it initiates a pro-inflammatory response through the cleavage of the two inflammatory cytokines IL1B and IL18, releasing the mature cytokines which are involved in a variety of inflammatory processes. Cleaves a tetrapeptide after an Asp residue at position P1. Also initiates pyroptosis, a programmed lytic cell death pathway, through cleavage of GSDMD. In contrast to cleavage of interleukin IL1B, recognition and cleavage of GSDMD is not strictly dependent on the consensus cleavage site but depends on an exosite interface on CASP1 that recognizes and binds the Gasdermin-D, C-terminal (GSDMD-CT) part. Cleaves and activates CASP7 in response to bacterial infection, promoting plasma membrane repair. Upon inflammasome activation, during DNA virus infection but not RNA virus challenge, controls antiviral immunity through the cleavage of CGAS, rendering it inactive. In apoptotic cells, cleaves SPHK2 which is released from cells and remains enzymatically active extracellularly. Apoptosis inactive. This is Caspase-1 (CASP1) from Homo sapiens (Human).